Consider the following 319-residue polypeptide: NH(3)-dependent NAD(+) synthetase (319 aa).

Residue 33–40 (GLSGGIDS) coordinates ATP. Residue aspartate 39 coordinates Mg(2+). Arginine 169 contributes to the deamido-NAD(+) binding site. Residue threonine 189 participates in ATP binding. Residue glutamate 194 participates in Mg(2+) binding. Positions 202 and 209 each coordinate deamido-NAD(+). Residues lysine 218 and threonine 240 each contribute to the ATP site.

The protein belongs to the NAD synthetase family. Homodimer.

The catalysed reaction is deamido-NAD(+) + NH4(+) + ATP = AMP + diphosphate + NAD(+) + H(+). It participates in cofactor biosynthesis; NAD(+) biosynthesis; NAD(+) from deamido-NAD(+) (ammonia route): step 1/1. Catalyzes the ATP-dependent amidation of deamido-NAD to form NAD. Uses ammonia as a nitrogen source. In Mesorhizobium japonicum (strain LMG 29417 / CECT 9101 / MAFF 303099) (Mesorhizobium loti (strain MAFF 303099)), this protein is NH(3)-dependent NAD(+) synthetase.